The following is a 391-amino-acid chain: Nucleosome assembly protein 1-like 1 (391 aa).

Over residues 1–10 (MADIDNKEQS) the composition is skewed to basic and acidic residues. The tract at residues 1–32 (MADIDNKEQSELDQDLDDVEEVEEEETGEETK) is disordered. Alanine 2 is subject to N-acetylalanine. Position 10 is a phosphoserine (serine 10). Over residues 11-28 (ELDQDLDDVEEVEEEETG) the composition is skewed to acidic residues. Threonine 62 and threonine 64 each carry phosphothreonine. Residue serine 69 is modified to Phosphoserine. N6-acetyllysine is present on lysine 116. Positions 125-150 (YEPTEEECEWKPDEEDEISEELKEKA) match the NAP1L motif motif. Over residues 132–143 (CEWKPDEEDEIS) the composition is skewed to acidic residues. Positions 132 to 163 (CEWKPDEEDEISEELKEKAKVEDEKKDEEKED) are disordered. Serine 143 carries the phosphoserine modification. Basic and acidic residues predominate over residues 144–163 (EELKEKAKVEDEKKDEEKED). The short motif at 273 to 279 (IKKKQKH) is the Nuclear localization signal element. The interval 345 to 391 (EAIEDDDDDYDEEGEEADEEGEEEGDEENDPDYDPKKDQNPAECKQQ) is disordered. Residues 346 to 376 (AIEDDDDDYDEEGEEADEEGEEEGDEENDPD) are compositionally biased toward acidic residues. 2 positions are modified to 5-glutamyl polyglycine: glutamate 359 and glutamate 360. The span at 377–391 (YDPKKDQNPAECKQQ) shows a compositional bias: basic and acidic residues. Position 388 is a cysteine methyl ester (cysteine 388). Residue cysteine 388 is the site of S-farnesyl cysteine attachment. The propeptide at 389–391 (KQQ) is removed in mature form.

The protein belongs to the nucleosome assembly protein (NAP) family. In terms of assembly, homodimer. The dimer binds strongly and sequentially to single and double H2A-H2B heterodimers. Interacts with ERCC6; this interaction increases ERCC6 processivity. Interacts with RAD54. Interacts with SETD1A. Post-translationally, polyglycylated by TTLL10 on glutamate residues, resulting in polyglycine chains on the gamma-carboxyl group. Both polyglutamylation and polyglycylation modifications can coexist on the same protein on adjacent residues, and lowering polyglycylation levels increases polyglutamylation, and reciprocally. In terms of processing, polyglutamylated by TTLL4 on glutamate residues, resulting in polyglutamate chains on the gamma-carboxyl group. Both polyglutamylation and polyglycylation modifications can coexist on the same protein on adjacent residues, and lowering polyglycylation levels increases polyglutamylation, and reciprocally.

It localises to the nucleus. It is found in the melanosome. Its subcellular location is the cytoplasm. In terms of biological role, histone chaperone that plays a role in the nuclear import of H2A-H2B and nucleosome assembly. Also participates in several important DNA repair mechanisms: greatly enhances ERCC6-mediated chromatin remodeling which is essential for transcription-coupled nucleotide excision DNA repair. Also stimulates homologous recombination (HR) by RAD51 and RAD54 which is essential in mitotic DNA double strand break (DSB) repair. Plays a key role in the regulation of embryonic neurogenesis. Promotes the proliferation of neural progenitors and inhibits neuronal differentiation during cortical development. Regulates neurogenesis via the modulation of RASSF10; regulates RASSF10 expression by promoting SETD1A-mediated H3K4 methylation at the RASSF10 promoter. In Bos taurus (Bovine), this protein is Nucleosome assembly protein 1-like 1 (NAP1L1).